Here is a 324-residue protein sequence, read N- to C-terminus: mRNA decay activator protein ZFP36 (324 aa).

The necessary for nuclear export stretch occupies residues 1 to 15 (MDLAAIYKSLLSLSP). Positions 1-98 (MDLAAIYKSL…PTSPTATPTT (98 aa)) are necessary and sufficient for the association with mRNA decay enzymes and mRNA decay activation. 2 necessary for localization of ARE-containing mRNAs to processing bodies (PBs) regions span residues 1–172 (MDLA…DLAA) and 98–324 (TSSR…SVSE). The segment covering 15 to 46 (PELPSDLGETESSTSWASSGPWSLSSSDSSLP) has biased composition (low complexity). The interval 15–50 (PELPSDLGETESSTSWASSGPWSLSSSDSSLPEVAA) is disordered. At serine 58 the chain carries Phosphoserine; by MAPKAPK2. The residue at position 64 (serine 64) is a Phosphoserine. One copy of the P-P-P-P-G repeat lies at 69–73 (PPPPG). A disordered region spans residues 76–100 (PLAPRPSSDWSPSPTSPTATPTTSS). Phosphoserine occurs at positions 86 and 88. Threonine 90 carries the post-translational modification Phosphothreonine. Serine 91 is subject to Phosphoserine. The segment at 93–166 (TATPTTSSRY…GSRCHFIHNP (74 aa)) is necessary for nuclear localization. The tract at residues 95–171 (TPTTSSRYKT…FIHNPSEDLA (77 aa)) is necessary for RNA-binding. 2 C3H1-type zinc fingers span residues 101–129 (RYKT…HGLG) and 139–167 (KYKT…HNPS). The tract at residues 101–192 (RYKTELCRTF…ISFSGLPSGR (92 aa)) is necessary for interaction with PABPN1. Serine 167 carries the post-translational modification Phosphoserine. A necessary for mRNA decay activation region spans residues 172-324 (APGHPHVLRQ…PIFNRISVSE (153 aa)). Residue serine 184 is modified to Phosphoserine; by MAPKAPK2. Disordered regions lie at residues 185 to 227 (FSGL…LLLS) and 270 to 324 (PSAH…SVSE). Serine 195 carries the phosphoserine modification. The stretch at 196 to 200 (PPPAS) is one P-P-P-P-G repeat. Positions 204–214 (PSVSSWSFSPS) are enriched in low complexity. Residue serine 216 is modified to Phosphoserine. The P-P-P-P-G repeat unit spans residues 218 to 222 (PPPPG). Serine 227 carries the phosphoserine; by MAPK1; in vitro modification. Serine 274, serine 294, and serine 321 each carry phosphoserine. The interaction with CNOT1 stretch occupies residues 310–324 (APRRLPIFNRISVSE).

Associates with cytoplasmic CCR4-NOT and PAN2-PAN3 deadenylase complexes to trigger ARE-containing mRNA deadenylation and decay processes. Part of a mRNA decay activation complex at least composed of poly(A)-specific exoribonucleases CNOT6, EXOSC2 and XRN1 and mRNA-decapping enzymes DCP1A and DCP2. Associates with the RNA exosome complex. Interacts (via phosphorylated form) with 14-3-3 proteins; these interactions promote exclusion of ZFP36 from cytoplasmic stress granules in response to arsenite treatment in a MAPKAPK2-dependent manner and does not prevent CCR4-NOT deadenylase complex recruitment or ZFP36-induced ARE-containing mRNA deadenylation and decay processes. Interacts with 14-3-3 proteins; these interactions occur in response to rapamycin in an Akt-dependent manner. Interacts with AGO2 and AGO4. Interacts (via C-terminus) with CNOT1; this interaction occurs in a RNA-independent manner and induces mRNA deadenylation. Interacts (via N-terminus) with CNOT6. Interacts with CNOT6L. Interacts (via C-terminus) with CNOT7; this interaction occurs in a RNA-independent manner, induces mRNA deadenylation and is inhibited in a phosphorylation MAPKAPK2-dependent manner. Interacts (via unphosphorylated form) with CNOT8; this interaction occurs in a RNA-independent manner and is inhibited in a phosphorylation MAPKAPK2-dependent manner. Interacts with DCP1A. Interacts (via N-terminus) with DCP2. Interacts with EDC3. Interacts (via N-terminus) with EXOSC2. Interacts with heat shock 70 kDa proteins. Interacts with KHSRP; this interaction increases upon cytokine-induced treatment. Interacts with MAP3K4; this interaction enhances the association with SH3KBP1/CIN85. Interacts with MAPKAPK2; this interaction occurs upon skeletal muscle satellite cell activation. Interacts with NCL. Interacts with NUP214; this interaction increases upon lipopolysaccharide (LPS) stimulation. Interacts with PABPC1; this interaction occurs in a RNA-dependent manner. Interacts (via hypophosphorylated form) with PABPN1 (via RRM domain and C-terminal arginine-rich region); this interaction occurs in the nucleus in a RNA-independent manner, decreases in presence of single-stranded poly(A) RNA-oligomer and in a p38 MAPK-dependent-manner and inhibits nuclear poly(A) tail synthesis. Interacts with PAN2. Interacts (via C3H1-type zinc finger domains) with PKM. Interacts (via C3H1-type zinc finger domains) with nuclear RNA poly(A) polymerase. Interacts with PPP2CA; this interaction occurs in LPS-stimulated cells and induces ZFP36 dephosphorylation, and hence may promote ARE-containing mRNAs decay. Interacts (via C-terminus) with PRR5L (via C-terminus); this interaction may accelerate ZFP36-mediated mRNA decay during stress. Interacts (via C-terminus) with SFN; this interaction occurs in a phosphorylation-dependent manner. Interacts (via extreme C-terminal region) with SH3KBP1/CIN85 (via SH3 domains); this interaction enhances MAP3K4-induced phosphorylation of ZFP36 at Ser-64 and Ser-91 and does not alter neither ZFP36 binding to ARE-containing transcripts nor TNF-alpha mRNA decay. Interacts with XRN1. Interacts (via C-terminus and Ser-184 phosphorylated form) with YWHAB; this interaction occurs in a p38/MAPKAPK2-dependent manner, increases cytoplasmic localization of ZFP36 and protects ZFP36 from Ser-184 dephosphorylation by serine/threonine phosphatase 2A, and hence may be crucial for stabilizing ARE-containing mRNAs. Interacts (via phosphorylated form) with YWHAE. Interacts (via C-terminus) with YWHAG; this interaction occurs in a phosphorylation-dependent manner. Interacts with YWHAH; this interaction occurs in a phosphorylation-dependent manner. Interacts with YWHAQ; this interaction occurs in a phosphorylation-dependent manner. Interacts with (via C-terminus) YWHAZ; this interaction occurs in a phosphorylation-dependent manner. Does not interact with SH3KBP1. Interacts (via P-P-P-P-G repeats) with GIGYF2; the interaction is direct. Phosphorylated. Phosphorylation at serine and/or threonine residues occurs in a p38 MAPK- and MAPKAPK2-dependent manner. Phosphorylated by MAPKAPK2 at Ser-58 and Ser-184; phosphorylation increases its stability and cytoplasmic localization, promotes binding to 14-3-3 adapter proteins and inhibits the recruitment of cytoplasmic CCR4-NOT and PAN2-PAN3 deadenylase complexes to the mRNA decay machinery, thereby inhibiting ZFP36-induced ARE-containing mRNA deadenylation and decay processes. Phosphorylation by MAPKAPK2 does not impair ARE-containing RNA-binding. Phosphorylated in a MAPKAPK2- and p38 MAPK-dependent manner upon skeletal muscle satellite cell activation; this phosphorylation inhibits ZFP36-mediated mRNA decay activity, and hence stabilizes MYOD1 mRNA. Phosphorylated by MAPK1 upon mitogen stimulation. Phosphorylated at Ser-64 and Ser-91; these phosphorylations increase in a SH3KBP1-dependent manner. Phosphorylated at serine and threonine residues in a pyruvate kinase PKM- and p38 MAPK-dependent manner. Phosphorylation at Ser-58 may participate in the PKM-mediated degradation of ZFP36 in a p38 MAPK-dependent manner. Dephosphorylated by serine/threonine phosphatase 2A at Ser-184. Post-translationally, ubiquitinated; pyruvate kinase (PKM)-dependent ubiquitination leads to proteasomal degradation through a p38 MAPK signaling pathway.

It localises to the nucleus. It is found in the cytoplasm. The protein localises to the cytoplasmic granule. Its subcellular location is the P-body. Its function is as follows. Zinc-finger RNA-binding protein that destabilizes numerous cytoplasmic AU-rich element (ARE)-containing mRNA transcripts by promoting their poly(A) tail removal or deadenylation, and hence provide a mechanism for attenuating protein synthesis. Acts as an 3'-untranslated region (UTR) ARE mRNA-binding adapter protein to communicate signaling events to the mRNA decay machinery. Recruits deadenylase CNOT7 (and probably the CCR4-NOT complex) via association with CNOT1, and hence promotes ARE-mediated mRNA deadenylation. Also functions by recruiting components of the cytoplasmic RNA decay machinery to the bound ARE-containing mRNAs. Self regulates by destabilizing its own mRNA. Binds to 3'-UTR ARE of numerous mRNAs. Also binds to ARE of its own mRNA. Plays a role in anti-inflammatory responses; suppresses tumor necrosis factor (TNF)-alpha production by stimulating ARE-mediated TNF-alpha mRNA decay and several other inflammatory ARE-containing mRNAs in interferon (IFN)- and/or lipopolysaccharide (LPS)-induced macrophages. Also plays a role in the regulation of dendritic cell maturation at the post-transcriptional level, and hence operates as part of a negative feedback loop to limit the inflammatory response. Promotes ARE-mediated mRNA decay of hypoxia-inducible factor HIF1A mRNA during the response of endothelial cells to hypoxia. Positively regulates early adipogenesis of preadipocytes by promoting ARE-mediated mRNA decay of immediate early genes (IEGs). Negatively regulates hematopoietic/erythroid cell differentiation by promoting ARE-mediated mRNA decay of the transcription factor STAT5B mRNA. Plays a role in maintaining skeletal muscle satellite cell quiescence by promoting ARE-mediated mRNA decay of the myogenic determination factor MYOD1 mRNA. Also associates with and regulates the expression of non-ARE-containing target mRNAs at the post-transcriptional level, such as MHC class I mRNAs. Participates in association with argonaute RISC catalytic components in the ARE-mediated mRNA decay mechanism; assists microRNA (miRNA) targeting ARE-containing mRNAs. May also play a role in the regulation of cytoplasmic mRNA decapping; enhances decapping of ARE-containing RNAs, in vitro. Involved in the delivery of target ARE-mRNAs to processing bodies (PBs). In addition to its cytosolic mRNA-decay function, affects nuclear pre-mRNA processing. Negatively regulates nuclear poly(A)-binding protein PABPN1-stimulated polyadenylation activity on ARE-containing pre-mRNA during LPS-stimulated macrophages. Also involved in the regulation of stress granule (SG) and P-body (PB) formation and fusion. Plays a role in the regulation of keratinocyte proliferation, differentiation and apoptosis. Plays a role as a tumor suppressor by inhibiting cell proliferation in breast cancer cells. In Bos taurus (Bovine), this protein is mRNA decay activator protein ZFP36.